The primary structure comprises 184 residues: Probable RNA 2'-phosphotransferase (184 aa).

This sequence belongs to the KptA/TPT1 family.

Its function is as follows. Removes the 2'-phosphate from RNA via an intermediate in which the phosphate is ADP-ribosylated by NAD followed by a presumed transesterification to release the RNA and generate ADP-ribose 1''-2''-cyclic phosphate (APPR&gt;P). May function as an ADP-ribosylase. This Burkholderia pseudomallei (strain K96243) protein is Probable RNA 2'-phosphotransferase.